A 157-amino-acid chain; its full sequence is Dihydrofolate reductase type 1 (157 aa).

Residues 2-156 enclose the DHFR domain; it reads KLSLMVAISK…INYSYQIWQK (155 aa).

It belongs to the dihydrofolate reductase family. In terms of assembly, homodimer.

It carries out the reaction (6S)-5,6,7,8-tetrahydrofolate + NADP(+) = 7,8-dihydrofolate + NADPH + H(+). It participates in cofactor biosynthesis; tetrahydrofolate biosynthesis; 5,6,7,8-tetrahydrofolate from 7,8-dihydrofolate: step 1/1. In terms of biological role, key enzyme in folate metabolism. Catalyzes an essential reaction for de novo glycine and purine synthesis, and for DNA precursor synthesis. This Escherichia coli protein is Dihydrofolate reductase type 1 (dhfrI).